Consider the following 548-residue polypeptide: MDSQRNLLVIALLFVSFMIWQAWEQDKNPQPQTQQTTQTTTTAAGSAADQGVPASGQGKMITVKTDVLDLTINTRGGDVEQALLPAYPKELGSNEPFQLLETTPQFIYQAQSGLTGRDGPDNPANGPRPLYNVEKEAFVLADGQNELQVPMTYTDAAGNTFTKTFVFKRGDYAVNVNYSVQNTGEKPLEVSTFGQLKQSVNLPPHRDTGSSNFALHTFRGAAYSTPDEKYEKYKFDTIADNENLNVSSKGGWVAMLQQYFATAWIPRNDGTNNFYTANLGNGIVAIGYKAQPVLVQPGQTGAMTSTLWVGPEIQDKMAAVAPHLDLTVDYGWLWFISQPLFKLLKWIHSFVGNWGFSIIIITFIVRGIMYPLTKAQYTSMAKMRMLQPKIQAMRERLGDDKQRQSQEMMALYKAEKVNPLGGCFPLIIQMPIFLALYYMLMGSIELRHAPFALWIHDLSAQDPYYILPILMGVTMFFIQKMSPTTVTDPMQQKIMTFMPVIFTVFFLWFPSGLVLYYIVSNLVTIIQQQLIYRGLEKRGLHSSEKKKS.

The chain crosses the membrane as a helical span at residues 6–26; that stretch reads NLLVIALLFVSFMIWQAWEQD. The disordered stretch occupies residues 28-56; the sequence is NPQPQTQQTTQTTTTAAGSAADQGVPASG. Low complexity predominate over residues 29–42; the sequence is PQPQTQQTTQTTTT. 4 consecutive transmembrane segments (helical) span residues 350 to 370, 424 to 444, 458 to 478, and 499 to 519; these read FVGN…GIMY, FPLI…MGSI, LSAQ…MFFI, and PVIF…YYIV.

It belongs to the OXA1/ALB3/YidC family. Type 1 subfamily. Interacts with the Sec translocase complex via SecD. Specifically interacts with transmembrane segments of nascent integral membrane proteins during membrane integration.

The protein localises to the cell inner membrane. Its function is as follows. Required for the insertion and/or proper folding and/or complex formation of integral membrane proteins into the membrane. Involved in integration of membrane proteins that insert both dependently and independently of the Sec translocase complex, as well as at least some lipoproteins. Aids folding of multispanning membrane proteins. This is Membrane protein insertase YidC from Salmonella dublin (strain CT_02021853).